A 98-amino-acid polypeptide reads, in one-letter code: MLEKKTNTEFLVLSTTNTQDKNIKQPLCELVKKSLKYYLSNLNGKDVNNLYELALSELEQPLLDMIMQYTRGNQTRAALMLGINRSTLRKKLKKYSMN.

The H-T-H motif DNA-binding region spans 74-93 (QTRAALMLGINRSTLRKKLK).

It belongs to the transcriptional regulatory Fis family. In terms of assembly, homodimer.

Activates ribosomal RNA transcription. Plays a direct role in upstream activation of rRNA promoters. The protein is DNA-binding protein Fis of Buchnera aphidicola subsp. Acyrthosiphon pisum (strain 5A).